Reading from the N-terminus, the 221-residue chain is Riboflavin kinase (221 aa).

An H-T-H motif-like region spans residues 1-92 (MVTPEDLECL…YRLFGRQEKS (92 aa)). A riboflavin kinase region spans residues 93–221 (LMLNGTVQSG…GDEVTIEVTL (129 aa)). 102–107 (GLGEGA) is a CDP binding site. Mg(2+)-binding residues include T131 and N133. Positions 188 and 196 each coordinate FMN. A CDP-binding site is contributed by 201-204 (EGLR).

Belongs to the archaeal riboflavin kinase family. Requires Mg(2+) as cofactor.

It carries out the reaction riboflavin + CTP = CDP + FMN + H(+). Its pathway is cofactor biosynthesis; FMN biosynthesis; FMN from riboflavin (CTP route): step 1/1. Catalyzes the CTP-dependent phosphorylation of riboflavin (vitamin B2) to form flavin mononucleotide (FMN). The protein is Riboflavin kinase (ribK) of Methanospirillum hungatei JF-1 (strain ATCC 27890 / DSM 864 / NBRC 100397 / JF-1).